We begin with the raw amino-acid sequence, 615 residues long: Alpha-terpinene synthase TPS33PK, chloroplastic (615 aa).

Residues 1 to 33 (MFCRLGVHQFSPLSLILNTTKLARASTLSSACY) constitute a chloroplast transit peptide. Glu-334, Val-371, Leu-375, Leu-513, and Ser-516 together coordinate (2E)-geranyl diphosphate. Positions 371 and 375 each coordinate Mg(2+). A DDXXD motif motif is present at residues 371–375 (VYGTL). Positions 516, 520, and 524 each coordinate Mg(2+).

It belongs to the terpene synthase family. Tpsb subfamily. Mg(2+) serves as cofactor. It depends on Mn(2+) as a cofactor.

Its subcellular location is the plastid. The protein localises to the chloroplast. The enzyme catalyses (2E)-geranyl diphosphate = alpha-terpinene + diphosphate. It catalyses the reaction (2E)-geranyl diphosphate = gamma-terpinene + diphosphate. Its pathway is secondary metabolite biosynthesis; terpenoid biosynthesis. Its function is as follows. Involved in monoterpene (C10) olefins biosynthesis, constituants of cannabinoids and terpenoids-rich resins. Catalyzes mainly the conversion of (2E)-geranyl diphosphate to alpha-terpinene and gamma-terpinene. In Cannabis sativa (Hemp), this protein is Alpha-terpinene synthase TPS33PK, chloroplastic.